The chain runs to 622 residues: Apical membrane antigen 1 (622 aa).

The first 24 residues, 1–24 (MRKLYCVLLLSAFEFTYMINFGRG), serve as a signal peptide directing secretion. Topologically, residues 25 to 546 (QNYWEHPYQN…EHKPTYDNMK (522 aa)) are extracellular. 5 disulfide bridges follow: C149/C302, C217/C247, C263/C275, C320/C418, and C337/C409. N-linked (GlcNAc...) asparagine glycans are attached at residues N286, N371, N421, N422, and N499. Intrachain disulfides connect C443-C502, C490-C507, and C492-C509. Residues 547–567 (IIIASSAAVAVLATILMVYLY) traverse the membrane as a helical segment. Residues 568 to 622 (KRKGNAEKYDKMDEPQDYGKSTSRNDEMLDPEASFWGEEKRASHTTPVLMEKPYY) are Cytoplasmic-facing. The interval 577-607 (DKMDEPQDYGKSTSRNDEMLDPEASFWGEEK) is disordered.

The protein belongs to the apicomplexan parasites AMA1 family.

It localises to the membrane. Involved in parasite invasion of erythrocytes. In Plasmodium falciparum (isolate thtn / Thailand), this protein is Apical membrane antigen 1 (AMA-1).